The chain runs to 122 residues: MSDTLPGTTLPDDNHDRPWWGLPCTVTPCFGARLVQEGNRLHYLADRAGIRGLFSDADAYHLDQAFPLLMKQLELMLTSGELNPRHQHTVTLYAKGLTCKADTLSSCDYVYLAVYPTPEMKN.

Mg(2+) contacts are provided by histidine 86, histidine 88, and aspartate 102.

It belongs to the CbeA/YafW/YfjZ antitoxin family. In terms of assembly, homodimer. Interacts with polymerized and monomeric MreB and polymerized FtsZ. Requires Mg(2+) as cofactor.

It is found in the cytoplasm. In terms of biological role, antitoxin component of a type IV toxin-antitoxin (TA) system. Antitoxin that counteracts the effect of its cognate toxin CbtA (YeeV). It does not bind to the toxin but instead binds to MreB and FtsZ (the toxin targets), enhancing their polymerization by forming higher-order bundles; it is probably retained in the MreB and FtsZ filament bundles. The mechanism has been proposed to require intergenic DNA, in cis, between the cbeA (yeeU) and cbta (yeeV) genes. The intergenic region was not found to be necessary in another study. Also counteracts the morphological defects caused by overexpression of SulA and DicB on cell shape. Also counteracts the effect of non-cognate toxins YfkI and YpjF. The protein is Cytoskeleton bundling-enhancing antitoxin CbeA (cbeA) of Escherichia coli (strain K12).